The chain runs to 194 residues: Calcium channel flower (194 aa).

The Cytoplasmic portion of the chain corresponds to 1–34 (MSFAEKITGLLARPNQQDPIGPEQPWYLKYGSRL). A helical membrane pass occupies residues 35–55 (LGIVAAFFAILFGLWNVFSII). At 56 to 65 (TLSVSCLVAG) the chain is on the extracellular side. The chain crosses the membrane as a helical span at residues 66 to 88 (ILQMVAGFVVMLLEAPCCFVCFG). Topologically, residues 89–106 (QVNEIAEKVESKPLYFRA) are cytoplasmic. The chain crosses the membrane as a helical span at residues 107–127 (GLYIAMAIPPIILCFGLASLF). The Extracellular portion of the chain corresponds to 128-194 (GSGLIFGTGV…TGAVGTDSNV (67 aa)). Important for promoting apoptosis stretches follow at residues 135 to 157 (TGVV…RAAA) and 135 to 192 (TGVV…GTDS).

This sequence belongs to the calcium channel flower family. As to quaternary structure, associates with the dally/ magu complex. Homomultimer. Associates with the dally/ magu complex. As to expression, detected in the imaginal wing disk (at protein level). In terms of tissue distribution, detected throughout the adult brain, including the optic lobe but, at much lower levels of expression than isoform Lose-A. Detected in the optic lobe (at protein level). Detected throughout the adult brain, including the optic lobe. Expressed in damaged and undamaged optic lobe neurons. As to expression, expressed in optic lobe neurons, with higher levels of expression in suboptimal neurons. Specifically expressed in injury-damaged optic lobe neurons.

It localises to the cell membrane. The protein resides in the cytoplasmic vesicle. The protein localises to the secretory vesicle. Its subcellular location is the synaptic vesicle membrane. It is found in the presynaptic cell membrane. It localises to the endosome. The protein resides in the synaptic vesicle. Channel activity is inhibited by La(3+), which reduces Ca(2+) influx and thus inhibits it's function in promoting activity-dependent bulk endocytosis (ADBE) in response to high stimuli. Functionally, transmembrane protein which mediates synaptic endocytosis, fitness-based cell culling, neuronal culling, morphogen gradient scaling, and calcium transport. Regulates synaptic endocytosis and hence couples exo- with endocytosis. Controls two major modes of synaptic vesicle (SV) endocytosis in the synaptic boutons of neuromuscular junctions (NMJs); Ca(2+) channel-independent Clathrin-mediated endocytosis (CME) in response to mild stimulation, and Ca(2+) channel-dependent activity-dependent bulk endocytosis (ADBE) in response to strong stimulation. Functions in ADBE and subsequent SV reformation from bulk endosomes by initiating Ca(2+) channel-dependent phosphatidylinositol 4,5-bisphosphate (PtdIns(4,5)P2) compartmentalization in synaptic boutons. There it acts at the periactive zone to provide the low Ca(2+) levels required to initiate Calcineurin activation and upregulate PtdIns(4,5)P2. Conversely PtdIns(4,5)P2 enhances fwe Ca(2+) channel-activity, establishing a positive feedback loop that induces PtdIns(4,5)P2 microdomain at the periactive zone. These microdomains trigger bulk membrane invagination (i.e. ADBE) by triggering actin polymerization while also promoting localization of fwe to bulk endosomes, thereby removing the ADBE trigger to reduce endocytosis and prevent excess membrane uptake. PtdIns(4,5)P2 then promotes SV reformation from the bulk endosomes, to coordinate ADBE and subsequent SV reformation. Different combinations of the flower isoforms at the cell membrane are also required for the identification and elimination of suboptimal or supernumerary cells during development, regeneration, and adulthood. Required for the recognition and elimination of unfit cells in the developing wing during cell competition. Also required for efficient identification and elimination of injured, damaged and/or dysfunctional neurons during regeneration of the adult brain. In the developing pupal retina, mediates the elimination of unwanted postmitotic neurons, including supernumerary photoreceptor neurons that form at the periphery of the retina and are contained within incomplete ommatidia units. Downstream of the flower fitness fingerprints, cells identified as unwanted or unfit are eliminated via apoptosis through the expression of ahuizotl (azot). However, the cells marked for elimination by the flower isoforms only undergo apoptosis if additional thresholds are met; (1) their neighboring fit/healthy cells express different levels of the fwe isoforms, and (2) the levels of the protective signal SPARC expressed by the loser or unwanted cells are unable to inhibit caspase activation. These additional thresholds for flower-mediated apoptosis, allows useful cells to recover from transient and limited stress before they are unnecessarily eliminated. Functions with dally and magu in a mechanism of scaling, which utilises apoptosis to ensure that the dpp morphogen gradient, which mediates organ growth, remains proportional to the size of the growing wing. In this mechanism, fwe represses dally- and Magu-dependent activity in expanding the gradient, and dally/Magu inhibits fwe-dependent apoptosis to keep cell death rate low. When the levels of these different proteins are optimally regulated the gradient correctly scales with organ growth but when this fails, fwe-mediated apoptosis is activated to trim the developing tissue to match the correct size of the gradient. Its function is as follows. Functions with the other flower isoforms to produce tissue-specific fitness fingerprints that identify unfit or fit cells during cell selection processes in order to maintain tissue health. In the wing imaginal disk, this isoform is highly expressed in healthy/normal cells but is down-regulated in cells with decreased fitness. During cell competition, if levels of this isoform in unfit cells is lower than in the surrounding neighboring cells, the suboptimal cells are recognized as 'loser' cells, and undergo elimination via apoptosis to be replaced by the surrounding healthy 'winner' cell population. Functions with the other flower isoforms to produce tissue-specific fitness fingerprints that identify unfit or fit cells during cell selection processes in order to maintain tissue health. In the wing imaginal disk, this isoform displays low levels of expression in healthy/normal cells but is up-regulated in cells with decreased fitness. During cell competition, if levels of this isoform in unfit cells is higher than in the surrounding neighboring cells, the suboptimal cells are recognized as 'loser' cells, and undergo elimination via apoptosis to be replaced by the surrounding healthy 'winner' cell population. In terms of biological role, functions with the other flower isoforms to produce tissue-specific fitness fingerprints that identify unfit cells for cell selection processes during development, regeneration, and to maintain tissue health. During cell competition in certain tissues, marks suboptimal or damaged cells as 'loser' cells. In cells of the wing imaginal disk and damaged or dysfunctional neurons in the adult optic lobe, this isoform displays low to no expression in healthy/normal cells but is up-regulated in cells with decreased fitness or damage-affected neurons. During cell competition, if levels of this isoform in unfit cells is higher than in the surrounding neighboring cells, the suboptimal cells are recognized as 'loser' cells, and undergo elimination via apoptosis to be replaced by the surrounding healthy/undamaged 'winner' cell population. In the developing pupal retina, also required for the recognition and elimination of postmitotic neurons, including supernumerary photoreceptor neurons that form at the periphery of the retina and are contained within incomplete ommatidia units. Activity at the peripheral retina is induced by the wg signaling pathway but, once activated, it promotes apoptosis of supernumerary photoreceptor neurons independently of wg signaling and snail function. This Drosophila melanogaster (Fruit fly) protein is Calcium channel flower (fwe).